The following is a 91-amino-acid chain: Non-structural protein 3a (91 aa).

The N-terminal stretch at 1-19 (MVSFNATAILLLLLANAFS) is a signal peptide.

The sequence is that of Non-structural protein 3a from Tylonycteris pachypus (Lesser bamboo bat).